A 601-amino-acid polypeptide reads, in one-letter code: Glutamyl-tRNA(Gln) amidotransferase subunit B, mitochondrial (601 aa).

A mitochondrion-targeting transit peptide spans Met1–Ser52.

Belongs to the GatB/GatE family. GatB subfamily. As to quaternary structure, subunit of the heterotrimeric GatCAB amidotransferase (AdT) complex, composed of A, B and C subunits.

The protein resides in the mitochondrion. It catalyses the reaction L-glutamyl-tRNA(Gln) + L-glutamine + ATP + H2O = L-glutaminyl-tRNA(Gln) + L-glutamate + ADP + phosphate + H(+). Functionally, allows the formation of correctly charged Gln-tRNA(Gln) through the transamidation of misacylated Glu-tRNA(Gln) in the mitochondria. The reaction takes place in the presence of glutamine and ATP through an activated gamma-phospho-Glu-tRNA(Gln). The sequence is that of Glutamyl-tRNA(Gln) amidotransferase subunit B, mitochondrial from Aspergillus fumigatus (strain ATCC MYA-4609 / CBS 101355 / FGSC A1100 / Af293) (Neosartorya fumigata).